A 215-amino-acid chain; its full sequence is TLD domain-containing protein 2 (215 aa).

Positions Met-1–Val-46 are disordered. Residues Leu-19–Ala-34 are compositionally biased toward acidic residues. A TLDc domain is found at Gln-54 to Ser-215.

It belongs to the OXR1 family.

This Homo sapiens (Human) protein is TLD domain-containing protein 2 (TLDC2).